The chain runs to 667 residues: UvrABC system protein B (667 aa).

A Helicase ATP-binding domain is found at 25–180; that stretch reads DSLQNQHRFQ…LLRALVSVQY (156 aa). 38–45 is an ATP binding site; the sequence is GATGTGKT. The Beta-hairpin signature appears at 91–114; sequence YYDYYQPEAYIPVSDTYIEKSSSI. Residues 429–595 form the Helicase C-terminal domain; sequence QVDDLLGEIK…PIVKRSSNSI (167 aa). Residues 626-661 form the UVR domain; that stretch reads PELIQQLEAQMKEAAKNLEFESAAKYRDRIKQLRDK.

This sequence belongs to the UvrB family. As to quaternary structure, forms a heterotetramer with UvrA during the search for lesions. Interacts with UvrC in an incision complex.

The protein localises to the cytoplasm. Its function is as follows. The UvrABC repair system catalyzes the recognition and processing of DNA lesions. A damage recognition complex composed of 2 UvrA and 2 UvrB subunits scans DNA for abnormalities. Upon binding of the UvrA(2)B(2) complex to a putative damaged site, the DNA wraps around one UvrB monomer. DNA wrap is dependent on ATP binding by UvrB and probably causes local melting of the DNA helix, facilitating insertion of UvrB beta-hairpin between the DNA strands. Then UvrB probes one DNA strand for the presence of a lesion. If a lesion is found the UvrA subunits dissociate and the UvrB-DNA preincision complex is formed. This complex is subsequently bound by UvrC and the second UvrB is released. If no lesion is found, the DNA wraps around the other UvrB subunit that will check the other stand for damage. The sequence is that of UvrABC system protein B from Microcystis aeruginosa (strain NIES-843 / IAM M-2473).